A 269-amino-acid polypeptide reads, in one-letter code: Phosphate import ATP-binding protein PstB (269 aa).

The ABC transporter domain occupies 22 to 264 (IKVKNVDFFY…PANKKTEDYI (243 aa)). An ATP-binding site is contributed by 55–62 (GSSGSGKS).

Belongs to the ABC transporter superfamily. Phosphate importer (TC 3.A.1.7) family. As to quaternary structure, the complex is composed of two ATP-binding proteins (PstB), two transmembrane proteins (PstC and PstA) and a solute-binding protein (PstS).

The protein resides in the cell membrane. The catalysed reaction is phosphate(out) + ATP + H2O = ADP + 2 phosphate(in) + H(+). Its function is as follows. Part of the ABC transporter complex PstSACB involved in phosphate import. Responsible for energy coupling to the transport system. The sequence is that of Phosphate import ATP-binding protein PstB from Spiroplasma kunkelii.